The following is a 317-amino-acid chain: tRNA dimethylallyltransferase (317 aa).

14-21 (GPTAVGKT) contacts ATP. 16–21 (TAVGKT) is a binding site for substrate. Residues 39-42 (DSMQ) form an interaction with substrate tRNA region.

The protein belongs to the IPP transferase family. Monomer. Mg(2+) serves as cofactor.

It catalyses the reaction adenosine(37) in tRNA + dimethylallyl diphosphate = N(6)-dimethylallyladenosine(37) in tRNA + diphosphate. In terms of biological role, catalyzes the transfer of a dimethylallyl group onto the adenine at position 37 in tRNAs that read codons beginning with uridine, leading to the formation of N6-(dimethylallyl)adenosine (i(6)A). This is tRNA dimethylallyltransferase from Bacillus mycoides (strain KBAB4) (Bacillus weihenstephanensis).